Reading from the N-terminus, the 55-residue chain is Large ribosomal subunit protein bL33 (55 aa).

It belongs to the bacterial ribosomal protein bL33 family.

This chain is Large ribosomal subunit protein bL33, found in Paenarthrobacter aurescens (strain TC1).